Here is a 156-residue protein sequence, read N- to C-terminus: Arginine repressor (156 aa).

This sequence belongs to the ArgR family.

The protein localises to the cytoplasm. It participates in amino-acid biosynthesis; L-arginine biosynthesis [regulation]. Regulates arginine biosynthesis genes. This Yersinia pseudotuberculosis serotype I (strain IP32953) protein is Arginine repressor.